We begin with the raw amino-acid sequence, 603 residues long: Elongation factor 4 (603 aa).

The region spanning 7-191 (DNIRNFSIVA…AIVTRLPPPQ (185 aa)) is the tr-type G domain. GTP is bound by residues 19-24 (DHGKST) and 138-141 (NKVD).

It belongs to the TRAFAC class translation factor GTPase superfamily. Classic translation factor GTPase family. LepA subfamily.

The protein resides in the cell inner membrane. The catalysed reaction is GTP + H2O = GDP + phosphate + H(+). Its function is as follows. Required for accurate and efficient protein synthesis under certain stress conditions. May act as a fidelity factor of the translation reaction, by catalyzing a one-codon backward translocation of tRNAs on improperly translocated ribosomes. Back-translocation proceeds from a post-translocation (POST) complex to a pre-translocation (PRE) complex, thus giving elongation factor G a second chance to translocate the tRNAs correctly. Binds to ribosomes in a GTP-dependent manner. This is Elongation factor 4 from Rhodopseudomonas palustris (strain HaA2).